Reading from the N-terminus, the 296-residue chain is Glycine--tRNA ligase alpha subunit (296 aa).

Belongs to the class-II aminoacyl-tRNA synthetase family. As to quaternary structure, tetramer of two alpha and two beta subunits.

It is found in the cytoplasm. The enzyme catalyses tRNA(Gly) + glycine + ATP = glycyl-tRNA(Gly) + AMP + diphosphate. The sequence is that of Glycine--tRNA ligase alpha subunit from Synechococcus sp. (strain WH7803).